The chain runs to 602 residues: Type II restriction enzyme StsI (602 aa).

The catalysed reaction is Endonucleolytic cleavage of DNA to give specific double-stranded fragments with terminal 5'-phosphates.. Functionally, an S subtype restriction enzyme that recognizes the double-stranded sequences 5'-GGATG-3' and 3'-CATCC-5' and cleaves respectively 15 bases after G-1 and 14 bases before C-1. The chain is Type II restriction enzyme StsI (stsIR) from Streptococcus sanguinis.